Reading from the N-terminus, the 290-residue chain is MGSSKKVTLSVLSREQSEGVGARVRRSIGRPELKNLDPFLLFDEFKGGRPGGFPDHPHRGFETVSYLLEGGSMAHEDFCGHTGKMNPGDLQWMTAGRGILHAEMPCSEEPAHGLQLWVNLRSSEKMVEPQYQELKSEEIPKPSKDGVTVAVISGEALGIKSKVYTRTPTLYLDFKLDPGAKHSQPIPKGWTSFIYTISGDVYIGPDDAQQKIEPHHTAVLGEGDSVQVENKDPKRSHFVLIAGEPLREPVIQHGPFVMNTNEEISQAILDFRNAKNGFERAKTWKSKIGN.

Residues H56, H58, H101, and E103 each coordinate Fe cation.

Belongs to the pirin family. In terms of assembly, may interact with NF1/CTF1. Interacts with BCL3. Identified in a complex comprised of PIR, BLC3, NFKB1 and target DNA. Fe cation serves as cofactor. As to expression, highly expressed in a subset of melanomas. Detected at very low levels in most tissues (at protein level). Expressed in all tissues, with highest level of expression in heart and liver.

It localises to the nucleus. The protein localises to the cytoplasm. It carries out the reaction quercetin + O2 = 2-(3,4-dihydroxybenzoyloxy)-4,6-dihydroxybenzoate + CO. It functions in the pathway flavonoid metabolism; quercetin degradation. Inhibited by kojic acid, sodium diethyldithiocarbamate and 1,10-phenanthroline monohydrochloride. In terms of biological role, transcriptional coregulator of NF-kappa-B which facilitates binding of NF-kappa-B proteins to target kappa-B genes in a redox-state-dependent manner. May be required for efficient terminal myeloid maturation of hematopoietic cells. Has quercetin 2,3-dioxygenase activity (in vitro). This Homo sapiens (Human) protein is Pirin (PIR).